A 158-amino-acid chain; its full sequence is Transcription elongation factor GreA (158 aa).

The protein belongs to the GreA/GreB family.

In terms of biological role, necessary for efficient RNA polymerase transcription elongation past template-encoded arresting sites. The arresting sites in DNA have the property of trapping a certain fraction of elongating RNA polymerases that pass through, resulting in locked ternary complexes. Cleavage of the nascent transcript by cleavage factors such as GreA or GreB allows the resumption of elongation from the new 3'terminus. GreA releases sequences of 2 to 3 nucleotides. The sequence is that of Transcription elongation factor GreA from Psychrobacter sp. (strain PRwf-1).